The sequence spans 83 residues: Apolipoprotein C-I (83 aa).

An N-terminal signal peptide occupies residues 1–26; that stretch reads MRLFLSLPVLVVVLSIVLEGPAPAQG.

This sequence belongs to the apolipoprotein C1 family. In terms of tissue distribution, synthesized mainly in liver and to a minor degree in intestine. Also found in the lung and spleen.

It is found in the secreted. In terms of biological role, inhibitor of lipoprotein binding to the low density lipoprotein (LDL) receptor, LDL receptor-related protein, and very low density lipoprotein (VLDL) receptor. Associates with high density lipoproteins (HDL) and the triacylglycerol-rich lipoproteins in the plasma and makes up about 10% of the protein of the VLDL and 2% of that of HDL. Appears to interfere directly with fatty acid uptake and is also the major plasma inhibitor of cholesteryl ester transfer protein (CETP). Binds free fatty acids and reduces their intracellular esterification. Modulates the interaction of APOE with beta-migrating VLDL and inhibits binding of beta-VLDL to the LDL receptor-related protein. The protein is Apolipoprotein C-I (APOC1) of Homo sapiens (Human).